A 426-amino-acid polypeptide reads, in one-letter code: MLKCVMSGSQVKVFGKAVQALSRISDEFWLDPSKKGLALRCVNSSRSAYGCVLFSPVFFQHYQWSALVKMSENELDTTLHLKCKLGMKSILPIFRCLNSLERNIEKCRIFTRSDKCKVVIQFFYRHGIKRTHNICFQESQPLQVIFDKNVCTNTLMIQPRLLADAIVLFTSSQEEVTLAVTPLNFCLKSSNEESMDLSNAVHSEMFVGSDEFDFFQIGMDTEITFCFKELKGILTFSEATHAPISIYFDFPGKPLALSIDDMLVEANFILATLADEQSRASSPQSLCLSQKRKRSDLIEKKAGKNVTGQALECISKKAAPRRLYPKETLTNISALENCGSPAMKRVDGDVSEVSESSVSNTEEVPGSLCLRKFSCMFFGAVSSDQQEHFNHPFDSLARASDSEEDMNNVCCRKEFNGSDAKYFCII.

Position 359 is a phosphoserine (S359).

Belongs to the rad9 family. Interacts with HUS1, HUS1B, RAD1, RAD9A and RAD17. As to expression, expressed in testis and skeletal muscle.

The sequence is that of Cell cycle checkpoint control protein RAD9B (RAD9B) from Homo sapiens (Human).